The primary structure comprises 425 residues: uncharacterized protein (425 aa).

12 helical membrane-spanning segments follow: residues 15–35 (LICA…SQML), 48–68 (LIGA…WAPL), 84–104 (MLLS…FDPL), 107–127 (LGTV…QDIV), 149–169 (INAY…LAAI), 174–194 (TVFL…LFLA), 225–245 (VIQA…DSFA), 271–291 (ALWS…KLGI), 295–315 (LWLF…LAAF), 331–351 (VVIA…VAFM), 370–390 (LSAL…GAVG), and 395–415 (FWFC…VAPL).

This sequence to E.coli AmpG and yeast YBR220c.

It is found in the cell inner membrane. This is an uncharacterized protein from Haemophilus influenzae (strain ATCC 51907 / DSM 11121 / KW20 / Rd).